Reading from the N-terminus, the 96-residue chain is Co-chaperonin GroES (96 aa).

It belongs to the GroES chaperonin family. Heptamer of 7 subunits arranged in a ring. Interacts with the chaperonin GroEL.

Its subcellular location is the cytoplasm. In terms of biological role, together with the chaperonin GroEL, plays an essential role in assisting protein folding. The GroEL-GroES system forms a nano-cage that allows encapsulation of the non-native substrate proteins and provides a physical environment optimized to promote and accelerate protein folding. GroES binds to the apical surface of the GroEL ring, thereby capping the opening of the GroEL channel. This Myxococcus xanthus (strain DK1622) protein is Co-chaperonin GroES.